The sequence spans 867 residues: Elongation factor 2 (867 aa).

The tr-type G domain occupies 17–368; the sequence is HNIRNLSVVA…MIVLHLPSPV (352 aa). GTP is bound at residue 26 to 33; it reads AHVDHGKS. A phosphothreonine mark is found at T57 and T59. Residues 176–179 and 231–233 each bind GTP; these read NKLD and SGL. H723 carries the post-translational modification Diphthamide.

It belongs to the TRAFAC class translation factor GTPase superfamily. Classic translation factor GTPase family. EF-G/EF-2 subfamily. In terms of processing, phosphorylation by EF-2 kinase completely inactivates EF-2.

The protein localises to the cytoplasm. It carries out the reaction GTP + H2O = GDP + phosphate + H(+). Catalyzes the GTP-dependent ribosomal translocation step during translation elongation. During this step, the ribosome changes from the pre-translocational (PRE) to the post-translocational (POST) state as the newly formed A-site-bound peptidyl-tRNA and P-site-bound deacylated tRNA move to the P and E sites, respectively. Catalyzes the coordinated movement of the two tRNA molecules, the mRNA and conformational changes in the ribosome. The chain is Elongation factor 2 from Blastocystis hominis.